A 276-amino-acid polypeptide reads, in one-letter code: Large ribosomal subunit protein uL2 (276 aa).

A disordered region spans residues 225–276; sequence MNPNDHPHGGGEGRNPIGRNPVTPWGKPALGAKTRKKKHPSNRFIVKRRGKK. Basic residues predominate over residues 257 to 276; that stretch reads KTRKKKHPSNRFIVKRRGKK.

The protein belongs to the universal ribosomal protein uL2 family. Part of the 50S ribosomal subunit. Forms a bridge to the 30S subunit in the 70S ribosome.

Its function is as follows. One of the primary rRNA binding proteins. Required for association of the 30S and 50S subunits to form the 70S ribosome, for tRNA binding and peptide bond formation. It has been suggested to have peptidyltransferase activity; this is somewhat controversial. Makes several contacts with the 16S rRNA in the 70S ribosome. This chain is Large ribosomal subunit protein uL2, found in Desulfitobacterium hafniense (strain Y51).